Here is a 258-residue protein sequence, read N- to C-terminus: UPF0246 protein YaaA (258 aa).

Belongs to the UPF0246 family.

The protein is UPF0246 protein YaaA of Shigella dysenteriae serotype 1 (strain Sd197).